Here is a 33-residue protein sequence, read N- to C-terminus: Cytochrome b6-f complex subunit 8 (33 aa).

The chain crosses the membrane as a helical span at residues 2–22; the sequence is LFTLAWASLAAVFSFSIAMVV.

It belongs to the PetN family. As to quaternary structure, the 4 large subunits of the cytochrome b6-f complex are cytochrome b6, subunit IV (17 kDa polypeptide, PetD), cytochrome f and the Rieske protein, while the 4 small subunits are PetG, PetL, PetM and PetN. The complex functions as a dimer.

It localises to the cellular thylakoid membrane. Functionally, component of the cytochrome b6-f complex, which mediates electron transfer between photosystem II (PSII) and photosystem I (PSI), cyclic electron flow around PSI, and state transitions. The protein is Cytochrome b6-f complex subunit 8 of Prochlorococcus marinus (strain MIT 9303).